The chain runs to 394 residues: Elongation factor Tu (394 aa).

The tr-type G domain maps to 10 to 204 (KPHVNVGTIG…ALDTYIPEPE (195 aa)). A G1 region spans residues 19–26 (GHVDHGKT). Position 19 to 26 (19 to 26 (GHVDHGKT)) interacts with GTP. Mg(2+) is bound at residue threonine 26. The tract at residues 60 to 64 (GITIN) is G2. The segment at 81-84 (DCPG) is G3. Residues 81-85 (DCPGH) and 136-139 (NKCD) contribute to the GTP site. The segment at 136–139 (NKCD) is G4. A G5 region spans residues 174 to 176 (SAL).

Belongs to the TRAFAC class translation factor GTPase superfamily. Classic translation factor GTPase family. EF-Tu/EF-1A subfamily. Monomer.

The protein localises to the cytoplasm. It carries out the reaction GTP + H2O = GDP + phosphate + H(+). Its function is as follows. GTP hydrolase that promotes the GTP-dependent binding of aminoacyl-tRNA to the A-site of ribosomes during protein biosynthesis. The sequence is that of Elongation factor Tu from Shewanella sediminis (strain HAW-EB3).